A 69-amino-acid polypeptide reads, in one-letter code: Guanine nucleotide-binding protein G(I)/G(S)/G(O) subunit gamma-T2 (69 aa).

Position 66 is a cysteine methyl ester (Cys-66). Cys-66 carries the S-farnesyl cysteine lipid modification. A propeptide spans 67 to 69 (VLS) (removed in mature form).

The protein belongs to the G protein gamma family. G proteins are composed of 3 units, alpha, beta and gamma.

It localises to the cell membrane. Guanine nucleotide-binding proteins (G proteins) are involved as a modulator or transducer in various transmembrane signaling systems. The beta and gamma chains are required for the GTPase activity, for replacement of GDP by GTP, and for G protein-effector interaction. This is Guanine nucleotide-binding protein G(I)/G(S)/G(O) subunit gamma-T2 (Gngt2) from Mus musculus (Mouse).